A 220-amino-acid chain; its full sequence is Chalcone--flavanone isomerase B (220 aa).

Thr-50, Asn-115, and Thr-192 together coordinate substrate.

It belongs to the chalcone isomerase family.

The enzyme catalyses a chalcone = a flavanone.. It functions in the pathway secondary metabolite biosynthesis; flavonoid biosynthesis. In terms of biological role, catalyzes the intramolecular cyclization of bicyclic chalcones into tricyclic (S)-flavanones. Responsible for the isomerization of 4,2',4',6'-tetrahydroxychalcone (also termed chalcone) into naringenin. The sequence is that of Chalcone--flavanone isomerase B (CHI2) from Petunia hybrida (Petunia).